We begin with the raw amino-acid sequence, 418 residues long: MFRRLLIATVVGILAAFAVAGFRHAMLLLEWLFLNNDSGSLVNAATNLSPWRRLLTPALGGLAAGLLLMGWQKFTQQRPHAPTDYMEALQTDGQFDYAASLVKSLASLLVVTSGSAIGREGAMILLAALAASCFAQRFTPRQEWKLWIACGAAAGMAAAYRAPLAGSLFIAEVLFGTMMLASLGPVIISAVVALLVSNLINHSDALLYSVQLSVTVQARDYALIISTGVLAGLCGPLLLTLMNACHRGFVSLKLAPPWQLALGGLIVGLLSLFTPAVWGNGYSTVQSFLTAPPLLMIIAGIFLCKLCAVLASSGSGAPGGVFTPTLFIGLAIGMLYGRSLGLWFPDGEEITLLLGLTGMATLLAATTHAPIMSTLMICEMTGEYQLLPGLLIACVIASVISRTLHRDSIYRQHTAKHS.

The next 10 helical transmembrane spans lie at 5-25 (LLIA…FRHA), 54-74 (LLTP…WQKF), 146-166 (LWIA…PLAG), 168-188 (LFIA…PVII), 222-242 (ALII…LTLM), 258-278 (WQLA…PAVW), 291-311 (APPL…AVLA), 316-336 (GAPG…GMLY), 352-372 (LLLG…APIM), and 380-400 (MTGE…ASVI).

This sequence belongs to the chloride channel (TC 2.A.49) family. ClcB subfamily.

The protein resides in the cell inner membrane. In terms of biological role, probably acts as an electrical shunt for an outwardly-directed proton pump that is linked to amino acid decarboxylation, as part of the extreme acid resistance (XAR) response. The sequence is that of Voltage-gated ClC-type chloride channel ClcB from Escherichia coli O127:H6 (strain E2348/69 / EPEC).